The following is a 349-amino-acid chain: Phenylalanine--tRNA ligase alpha subunit (349 aa).

Glutamate 262 lines the Mg(2+) pocket.

Belongs to the class-II aminoacyl-tRNA synthetase family. Phe-tRNA synthetase alpha subunit type 1 subfamily. As to quaternary structure, tetramer of two alpha and two beta subunits. The cofactor is Mg(2+).

It localises to the cytoplasm. It catalyses the reaction tRNA(Phe) + L-phenylalanine + ATP = L-phenylalanyl-tRNA(Phe) + AMP + diphosphate + H(+). The sequence is that of Phenylalanine--tRNA ligase alpha subunit from Sorangium cellulosum (strain So ce56) (Polyangium cellulosum (strain So ce56)).